A 335-amino-acid polypeptide reads, in one-letter code: Adenosine deaminase (335 aa).

The Zn(2+) site is built by His12 and His14. His14 and Asp16 together coordinate substrate. His197 is a Zn(2+) binding site. Catalysis depends on Glu200, which acts as the Proton donor. Asp278 is a Zn(2+) binding site.

It belongs to the metallo-dependent hydrolases superfamily. Adenosine and AMP deaminases family. Adenosine deaminase subfamily. Requires Zn(2+) as cofactor.

The enzyme catalyses adenosine + H2O + H(+) = inosine + NH4(+). It carries out the reaction 2'-deoxyadenosine + H2O + H(+) = 2'-deoxyinosine + NH4(+). Functionally, catalyzes the hydrolytic deamination of adenosine and 2-deoxyadenosine. The polypeptide is Adenosine deaminase (Clostridium botulinum (strain Kyoto / Type A2)).